Here is a 228-residue protein sequence, read N- to C-terminus: Endo-1,4-beta-xylanase B (228 aa).

Positions 1–19 are cleaved as a signal peptide; sequence MVSFTYLLAAVSAVTGAVA. The 191-residue stretch at 37–227 folds into the GH11 domain; that stretch reads KRTSPTTGVN…SSGQATMTVS (191 aa). Glu-122 functions as the Nucleophile in the catalytic mechanism. Residue Glu-214 is the Proton donor of the active site.

This sequence belongs to the glycosyl hydrolase 11 (cellulase G) family.

It is found in the secreted. It catalyses the reaction Endohydrolysis of (1-&gt;4)-beta-D-xylosidic linkages in xylans.. Its pathway is glycan degradation; xylan degradation. With respect to regulation, inhibited by the proteinaceous endoxylanase inhibitor I from T.aestivum (TAXI-I). Its function is as follows. Endo-1,4-beta-xylanase involved in the hydrolysis of xylan, a major structural heterogeneous polysaccharide found in plant biomass representing the second most abundant polysaccharide in the biosphere, after cellulose. Plays an important role in causing fusarium head blight (FHB) on cereal crops. Induces cell death and hydrogen peroxide accumulation in infected wheat leaves. This chain is Endo-1,4-beta-xylanase B (XYLB), found in Gibberella zeae (strain ATCC MYA-4620 / CBS 123657 / FGSC 9075 / NRRL 31084 / PH-1) (Wheat head blight fungus).